We begin with the raw amino-acid sequence, 321 residues long: Glucokinase (321 aa).

8-13 is a binding site for ATP; that stretch reads GDVGGT.

It belongs to the bacterial glucokinase family.

The protein resides in the cytoplasm. The catalysed reaction is D-glucose + ATP = D-glucose 6-phosphate + ADP + H(+). This chain is Glucokinase, found in Salmonella agona (strain SL483).